Consider the following 260-residue polypeptide: Phosphate import ATP-binding protein PstB (260 aa).

Positions 14–255 (IETENLSLFY…PKNTKTEEYI (242 aa)) constitute an ABC transporter domain. 46–53 (GPSGCGKS) is an ATP binding site.

It belongs to the ABC transporter superfamily. Phosphate importer (TC 3.A.1.7) family. The complex is composed of two ATP-binding proteins (PstB), two transmembrane proteins (PstC and PstA) and a solute-binding protein (PstS).

It is found in the cell inner membrane. The catalysed reaction is phosphate(out) + ATP + H2O = ADP + 2 phosphate(in) + H(+). Functionally, part of the ABC transporter complex PstSACB involved in phosphate import. Responsible for energy coupling to the transport system. The protein is Phosphate import ATP-binding protein PstB of Borrelia garinii subsp. bavariensis (strain ATCC BAA-2496 / DSM 23469 / PBi) (Borreliella bavariensis).